Here is a 65-residue protein sequence, read N- to C-terminus: uncharacterized protein (65 aa).

This is an uncharacterized protein from Dictyostelium discoideum (Social amoeba).